Here is a 425-residue protein sequence, read N- to C-terminus: Orexin/Hypocretin receptor type 1 (425 aa).

The disordered stretch occupies residues 1–24; sequence MEPSATPGAQMGVPPGSREPSPVP. Topologically, residues 1–46 are extracellular; it reads MEPSATPGAQMGVPPGSREPSPVPPDYEDEFLRYLWRDYLYPKQYE. Positions 26-41 are required for response to orexin-A; that stretch reads DYEDEFLRYLWRDYLY. The helical transmembrane segment at 47–67 threads the bilayer; that stretch reads WVLIAAYVAVFVVALVGNTLV. Over 68–82 the chain is Cytoplasmic; it reads CLAVWRNHHMRTVTN. The helical transmembrane segment at 83-105 threads the bilayer; that stretch reads YFIVNLSLADVLVTAICLPASLL. The Extracellular portion of the chain corresponds to 106-119; sequence VDITESWLFGHALC. Cys-119 and Cys-202 form a disulfide bridge. The chain crosses the membrane as a helical span at residues 120-140; that stretch reads KVIPYLQAVSVSVAVLTLSFI. Over 141 to 160 the chain is Cytoplasmic; that stretch reads ALDRWYAICHPLLFKSTARR. The helical transmembrane segment at 161–182 threads the bilayer; sequence ARGSILGIWAVSLAIMVPQAAV. Over 183-213 the chain is Extracellular; sequence MECSSVLPELANRTRLFSVCDERWADDLYPK. Asn-194 carries an N-linked (GlcNAc...) asparagine glycan. Residues 214 to 235 traverse the membrane as a helical segment; the sequence is IYHSCFFIVTYLAPLGLMAMAY. The Cytoplasmic segment spans residues 236–298; it reads FQIFRKLWGR…QMRARRKTAK (63 aa). A helical transmembrane segment spans residues 299-321; that stretch reads MLMVVLLVFALCYLPISVLNVLK. Asn-318 is a binding site for suvorexant. Residues 322-336 are Extracellular-facing; sequence RVFGMFRQASDREAV. The helical transmembrane segment at 337–360 threads the bilayer; sequence YACFTFSHWLVYANSAANPIIYNF. The Cytoplasmic portion of the chain corresponds to 361-425; the sequence is LSGKFREQFK…VLTSVTTVLP (65 aa).

It belongs to the G-protein coupled receptor 1 family.

Its subcellular location is the cell membrane. Moderately selective excitatory receptor for orexin-A and, with a lower affinity, for orexin-B neuropeptide. Triggers an increase in cytoplasmic Ca(2+) levels in response to orexin-A binding. This chain is Orexin/Hypocretin receptor type 1, found in Homo sapiens (Human).